The primary structure comprises 183 residues: Regulatory protein RecX (183 aa).

Residues 1 to 12 (MTSFPHPSTSES) show a composition bias toward polar residues. Residues 1–26 (MTSFPHPSTSESGPDPDSEPNREEQA) are disordered.

This sequence belongs to the RecX family.

It is found in the cytoplasm. Its function is as follows. Modulates RecA activity. The protein is Regulatory protein RecX of Mycobacterium sp. (strain KMS).